A 357-amino-acid chain; its full sequence is Phosphoribosylformylglycinamidine cyclo-ligase (357 aa).

Belongs to the AIR synthase family.

Its subcellular location is the cytoplasm. It catalyses the reaction 2-formamido-N(1)-(5-O-phospho-beta-D-ribosyl)acetamidine + ATP = 5-amino-1-(5-phospho-beta-D-ribosyl)imidazole + ADP + phosphate + H(+). It functions in the pathway purine metabolism; IMP biosynthesis via de novo pathway; 5-amino-1-(5-phospho-D-ribosyl)imidazole from N(2)-formyl-N(1)-(5-phospho-D-ribosyl)glycinamide: step 2/2. This chain is Phosphoribosylformylglycinamidine cyclo-ligase, found in Rhizobium etli (strain ATCC 51251 / DSM 11541 / JCM 21823 / NBRC 15573 / CFN 42).